We begin with the raw amino-acid sequence, 68 residues long: Small integral membrane protein 10-like protein 3 (68 aa).

In terms of tissue distribution, expressed specifically in salivary glands (at protein level).

The chain is Small integral membrane protein 10-like protein 3 from Mus musculus (Mouse).